Consider the following 874-residue polypeptide: Probable inorganic carbon transporter subunit DabA (874 aa).

4 residues coordinate Zn(2+): C398, D400, H580, and C595.

The protein belongs to the inorganic carbon transporter (TC 9.A.2) DabA family. Forms a complex with DabB. It depends on Zn(2+) as a cofactor.

It is found in the cell membrane. Functionally, part of an energy-coupled inorganic carbon pump. In Bacillus cereus (strain AH187), this protein is Probable inorganic carbon transporter subunit DabA.